Here is a 201-residue protein sequence, read N- to C-terminus: Probable GTP-binding protein EngB (201 aa).

The EngB-type G domain maps to 21-191 (PEAQIALAGR…WQELARAAGV (171 aa)). GTP-binding positions include 29–36 (GRSNVGKS), 56–60 (GKTRS), 75–78 (DLPG), 142–145 (TKAD), and 168–172 (VLTSS). Mg(2+) contacts are provided by serine 36 and threonine 58.

This sequence belongs to the TRAFAC class TrmE-Era-EngA-EngB-Septin-like GTPase superfamily. EngB GTPase family. It depends on Mg(2+) as a cofactor.

Necessary for normal cell division and for the maintenance of normal septation. In Desulfovibrio desulfuricans (strain ATCC 27774 / DSM 6949 / MB), this protein is Probable GTP-binding protein EngB.